Consider the following 185-residue polypeptide: Isopentenyl-diphosphate Delta-isomerase (185 aa).

The Mn(2+) site is built by His-27 and His-34. The region spanning 32–168 (PLHLAFSCHL…PWAFSPWLTL (137 aa)) is the Nudix hydrolase domain. Cys-69 is an active-site residue. Cys-69 contributes to the Mg(2+) binding site. His-71 contacts Mn(2+). Glu-89 is a binding site for Mg(2+). Residues Glu-118 and Glu-120 each coordinate Mn(2+). Residue Glu-120 is part of the active site.

This sequence belongs to the IPP isomerase type 1 family. It depends on Mg(2+) as a cofactor. Requires Mn(2+) as cofactor.

It is found in the cytoplasm. It catalyses the reaction isopentenyl diphosphate = dimethylallyl diphosphate. It functions in the pathway isoprenoid biosynthesis; dimethylallyl diphosphate biosynthesis; dimethylallyl diphosphate from isopentenyl diphosphate: step 1/1. Its function is as follows. Catalyzes the 1,3-allylic rearrangement of the homoallylic substrate isopentenyl (IPP) to its highly electrophilic allylic isomer, dimethylallyl diphosphate (DMAPP). The sequence is that of Isopentenyl-diphosphate Delta-isomerase from Leifsonia xyli subsp. xyli (strain CTCB07).